Reading from the N-terminus, the 178-residue chain is Large ribosomal subunit protein uL6 (178 aa).

The protein belongs to the universal ribosomal protein uL6 family. Part of the 50S ribosomal subunit.

Its function is as follows. This protein binds to the 23S rRNA, and is important in its secondary structure. It is located near the subunit interface in the base of the L7/L12 stalk, and near the tRNA binding site of the peptidyltransferase center. This Natranaerobius thermophilus (strain ATCC BAA-1301 / DSM 18059 / JW/NM-WN-LF) protein is Large ribosomal subunit protein uL6.